We begin with the raw amino-acid sequence, 250 residues long: MMSYSLRVADLPAGDRPREKLLSQGARYLSSAELLAILLGTGQGAGKLSAVGLGQFILKQLGERTGDSTDAVSALRDITPEELMAIPGVGPAKATTILAAVELGKRVFQSRPGEQTIIDSPALAAAVLAADLMWQATERFAVLLLDVRHRLLGSHVITVGTATETLAHPREIFREAVRRNASRLIIAHNHPSGNLSPSQADLDLTKQILQAGQLMEIPVLDHLILGNGDYQSLREITPLWQQVPQGDGSA.

An MPN domain is found at 116–239 (TIIDSPALAA…YQSLREITPL (124 aa)). The Zn(2+) site is built by His188, His190, and Asp201. The JAMM motif motif lies at 188–201 (HNHPSGNLSPSQAD).

Belongs to the UPF0758 family.

The sequence is that of UPF0758 protein tlr1707 from Thermosynechococcus vestitus (strain NIES-2133 / IAM M-273 / BP-1).